The sequence spans 417 residues: MTYIEILGQNAKKASQSVARLSTASKNEILRDLARNIVADTETILTENARDVVKAKDNGISEIMVDRLRLNKDRIQAIANGIYQVADLADPIGQVVSGYTNLDGLKILKKRVPLGVIAMIFESRPNVSVDAFSLAFKTGNAIILRGGKDAIFSNTALVNCMRQTLQDTGHNPDIVQLVEDTSHVVAEELMQATDYVDVLIPRGGAKLIQTVKEKSKIPVIETGVGNVHIYIDEFADLDMAAKIVINAKTQRPSVCNAAEGLVVHQAIAKGFLSQLEKMLKESNQSVEFRADEEALQLLENAVAASESDYATEFLDYIMSVKVVDSFEQAISWINKYSSHHSEAIITNNISRAEIFQDMVDAAAVYVNASTRFTDGFVFGLGAEIGISTQKLHARGPMGLEALTSTKYYINGTGQVRE.

This sequence belongs to the gamma-glutamyl phosphate reductase family.

The protein resides in the cytoplasm. It catalyses the reaction L-glutamate 5-semialdehyde + phosphate + NADP(+) = L-glutamyl 5-phosphate + NADPH + H(+). It participates in amino-acid biosynthesis; L-proline biosynthesis; L-glutamate 5-semialdehyde from L-glutamate: step 2/2. Its function is as follows. Catalyzes the NADPH-dependent reduction of L-glutamate 5-phosphate into L-glutamate 5-semialdehyde and phosphate. The product spontaneously undergoes cyclization to form 1-pyrroline-5-carboxylate. This is Gamma-glutamyl phosphate reductase from Streptococcus agalactiae serotype Ia (strain ATCC 27591 / A909 / CDC SS700).